We begin with the raw amino-acid sequence, 222 residues long: Nucleoside triphosphate pyrophosphatase (222 aa).

Catalysis depends on Asp-82, which acts as the Proton acceptor.

The protein belongs to the Maf family. Requires a divalent metal cation as cofactor.

It localises to the cytoplasm. The enzyme catalyses a ribonucleoside 5'-triphosphate + H2O = a ribonucleoside 5'-phosphate + diphosphate + H(+). It catalyses the reaction a 2'-deoxyribonucleoside 5'-triphosphate + H2O = a 2'-deoxyribonucleoside 5'-phosphate + diphosphate + H(+). Its function is as follows. Nucleoside triphosphate pyrophosphatase. May have a dual role in cell division arrest and in preventing the incorporation of modified nucleotides into cellular nucleic acids. This chain is Nucleoside triphosphate pyrophosphatase, found in Mycobacterium tuberculosis (strain ATCC 25177 / H37Ra).